The primary structure comprises 334 residues: HTH-type transcriptional repressor PurR (334 aa).

Positions 2-56 (ATIKDVARMAGVSTTTVSHVINKTRFVAEATQKKVLAAVDDLNYAPSAVARSLKC) constitute an HTH lacI-type domain. A DNA-binding region (H-T-H motif) is located at residues 4 to 23 (IKDVARMAGVSTTTVSHVIN). Residues 48–56 (SAVARSLKC) mediate DNA binding. Hypoxanthine is bound by residues Phe-73, Lys-189, Thr-191, Phe-220, and Asp-274.

In terms of assembly, homodimer.

It participates in purine metabolism; purine nucleotide biosynthesis [regulation]. Its function is as follows. Is the main repressor of the genes involved in the de novo synthesis of purine nucleotides, regulating purB, purC, purEK, purF, purHD, purL, purMN and guaBA expression. PurR is allosterically activated to bind its cognate DNA by binding the purine corepressors, hypoxanthine or guanine, thereby effecting transcription repression. This Photobacterium profundum (strain SS9) protein is HTH-type transcriptional repressor PurR.